A 127-amino-acid chain; its full sequence is Aspartate 1-decarboxylase (127 aa).

The active-site Schiff-base intermediate with substrate; via pyruvic acid is serine 25. Pyruvic acid (Ser) is present on serine 25. Threonine 57 contributes to the substrate binding site. Tyrosine 58 acts as the Proton donor in catalysis. Position 73–75 (73–75 (GAA)) interacts with substrate.

It belongs to the PanD family. In terms of assembly, heterooctamer of four alpha and four beta subunits. It depends on pyruvate as a cofactor. Post-translationally, is synthesized initially as an inactive proenzyme, which is activated by self-cleavage at a specific serine bond to produce a beta-subunit with a hydroxyl group at its C-terminus and an alpha-subunit with a pyruvoyl group at its N-terminus.

It localises to the cytoplasm. The enzyme catalyses L-aspartate + H(+) = beta-alanine + CO2. Its pathway is cofactor biosynthesis; (R)-pantothenate biosynthesis; beta-alanine from L-aspartate: step 1/1. Catalyzes the pyruvoyl-dependent decarboxylation of aspartate to produce beta-alanine. The chain is Aspartate 1-decarboxylase from Neisseria gonorrhoeae (strain ATCC 700825 / FA 1090).